Reading from the N-terminus, the 352-residue chain is Biotin synthase (352 aa).

One can recognise a Radical SAM core domain in the interval 44 to 262 (NRVQVSTLLS…LAVARILMPK (219 aa)). The [4Fe-4S] cluster site is built by cysteine 59, cysteine 63, and cysteine 66. [2Fe-2S] cluster-binding residues include cysteine 103, cysteine 134, cysteine 194, and arginine 266.

It belongs to the radical SAM superfamily. Biotin synthase family. In terms of assembly, homodimer. It depends on [4Fe-4S] cluster as a cofactor. The cofactor is [2Fe-2S] cluster.

It carries out the reaction (4R,5S)-dethiobiotin + (sulfur carrier)-SH + 2 reduced [2Fe-2S]-[ferredoxin] + 2 S-adenosyl-L-methionine = (sulfur carrier)-H + biotin + 2 5'-deoxyadenosine + 2 L-methionine + 2 oxidized [2Fe-2S]-[ferredoxin]. Its pathway is cofactor biosynthesis; biotin biosynthesis; biotin from 7,8-diaminononanoate: step 2/2. Its function is as follows. Catalyzes the conversion of dethiobiotin (DTB) to biotin by the insertion of a sulfur atom into dethiobiotin via a radical-based mechanism. This chain is Biotin synthase, found in Pseudomonas putida (strain ATCC 47054 / DSM 6125 / CFBP 8728 / NCIMB 11950 / KT2440).